We begin with the raw amino-acid sequence, 440 residues long: Lysine histidine transporter-like 6 (440 aa).

Positions methionine 1 to serine 10 are enriched in polar residues. Residues methionine 1–aspartate 25 are disordered. Over methionine 1–lysine 31 the chain is Cytoplasmic. Residues lysine 11–aspartate 25 are compositionally biased toward basic and acidic residues. The chain crosses the membrane as a helical span at residues tryptophan 32–leucine 51. Residues proline 52–glycine 61 are Extracellular-facing. Residues proline 62 to valine 82 form a helical membrane-spanning segment. At glutamine 83–glycine 109 the chain is on the cytoplasmic side. A helical transmembrane segment spans residues proline 110 to valine 130. Residues threonine 131 to glutamine 152 lie on the Extracellular side of the membrane. The chain crosses the membrane as a helical span at residues serine 153 to asparagine 173. A topological domain (cytoplasmic) is located at residue serine 174. Residues valine 175–glycine 195 traverse the membrane as a helical segment. Residues glycine 196–arginine 221 lie on the Extracellular side of the membrane. Residues valine 222–isoleucine 242 traverse the membrane as a helical segment. The Cytoplasmic segment spans residues glutamine 243–glycine 261. A helical transmembrane segment spans residues valine 262–tryptophan 282. Residues alanine 283 to alanine 300 are Extracellular-facing. A helical membrane pass occupies residues tryptophan 301 to phenylalanine 321. Over alanine 322 to tyrosine 353 the chain is Cytoplasmic. Transmembrane regions (helical) follow at residues valine 354–phenylalanine 374 and glycine 375–lysine 395. Residues lysine 396–arginine 399 are Cytoplasmic-facing. A helical transmembrane segment spans residues phenylalanine 400–alanine 420. Residues serine 421 to alanine 440 are Extracellular-facing.

The protein belongs to the amino acid/polyamine transporter 2 family. Amino acid/auxin permease (AAAP) (TC 2.A.18.2) subfamily.

The protein localises to the cell membrane. Functionally, amino acid transporter. This chain is Lysine histidine transporter-like 6, found in Arabidopsis thaliana (Mouse-ear cress).